A 232-amino-acid polypeptide reads, in one-letter code: Ribose-5-phosphate isomerase A (232 aa).

Residues 28–31 (TGST), 83–86 (DGAD), and 96–99 (KGGG) contribute to the substrate site. The active-site Proton acceptor is glutamate 105. Lysine 123 contributes to the substrate binding site.

The protein belongs to the ribose 5-phosphate isomerase family. As to quaternary structure, homodimer.

The catalysed reaction is aldehydo-D-ribose 5-phosphate = D-ribulose 5-phosphate. It functions in the pathway carbohydrate degradation; pentose phosphate pathway; D-ribose 5-phosphate from D-ribulose 5-phosphate (non-oxidative stage): step 1/1. Functionally, catalyzes the reversible conversion of ribose-5-phosphate to ribulose 5-phosphate. The polypeptide is Ribose-5-phosphate isomerase A (Allorhizobium ampelinum (strain ATCC BAA-846 / DSM 112012 / S4) (Agrobacterium vitis (strain S4))).